The primary structure comprises 165 residues: Small ribosomal subunit protein uS5 (165 aa).

The S5 DRBM domain maps to 13–76; that stretch reads LEEKVLVVNR…EAAKKNLMKI (64 aa).

This sequence belongs to the universal ribosomal protein uS5 family. As to quaternary structure, part of the 30S ribosomal subunit. Contacts proteins S4 and S8.

In terms of biological role, with S4 and S12 plays an important role in translational accuracy. Functionally, located at the back of the 30S subunit body where it stabilizes the conformation of the head with respect to the body. This Chlamydia pneumoniae (Chlamydophila pneumoniae) protein is Small ribosomal subunit protein uS5.